We begin with the raw amino-acid sequence, 276 residues long: Large ribosomal subunit protein uL2 (276 aa).

The segment at 219–276 (TVRGSVMNPNDHPHGGGEGKQPIGRKQQMTPWGKKARGIKTRDKKKASTSMIVRRRNG) is disordered. A compositionally biased stretch (basic residues) spans 252-276 (KKARGIKTRDKKKASTSMIVRRRNG).

Belongs to the universal ribosomal protein uL2 family. In terms of assembly, part of the 50S ribosomal subunit. Forms a bridge to the 30S subunit in the 70S ribosome.

Functionally, one of the primary rRNA binding proteins. Required for association of the 30S and 50S subunits to form the 70S ribosome, for tRNA binding and peptide bond formation. It has been suggested to have peptidyltransferase activity; this is somewhat controversial. Makes several contacts with the 16S rRNA in the 70S ribosome. This chain is Large ribosomal subunit protein uL2, found in Acholeplasma laidlawii (strain PG-8A).